The chain runs to 396 residues: Peptide chain release factor 1, mitochondrial (396 aa).

Gln-268 carries the post-translational modification N5-methylglutamine. Positions 317–340 (LEKEEKERNARKDQVSTTDRSDKI) are disordered.

It belongs to the prokaryotic/mitochondrial release factor family. In terms of processing, methylation of glutamine in the GGQ triplet is conserved from bacteria to mammals.

Its subcellular location is the mitochondrion. Functionally, mitochondrial peptide chain release factor that directs the termination of translation in response to the peptide chain termination codons UAA and UAG. The polypeptide is Peptide chain release factor 1, mitochondrial (MRF1) (Kluyveromyces lactis (strain ATCC 8585 / CBS 2359 / DSM 70799 / NBRC 1267 / NRRL Y-1140 / WM37) (Yeast)).